We begin with the raw amino-acid sequence, 599 residues long: Omega-hydroxyceramide transacylase (599 aa).

One can recognise a PNPLA domain in the interval 16-185; that stretch reads ISFSGSGFLS…TSMQPCSFWT (170 aa). The GXSXG motif lies at 51–55; it reads GTSAG. Serine 53 serves as the catalytic Nucleophile. Residue aspartate 172 is the Proton acceptor of the active site. The short motif at 172-174 is the DGA/G element; that stretch reads DGG. Residues 289-563 are disordered; sequence PPPPSLQNLP…PASKLKSAPC (275 aa). Composition is skewed to polar residues over residues 325-335 and 350-362; these read SSAAPSVQTPE and VSIS…SPLS. A compositionally biased stretch (low complexity) spans 443–454; it reads SPESPRLLLRSS. Over residues 468–478 the composition is skewed to pro residues; it reads PLSPSTPPAGP. Positions 490 to 501 are enriched in polar residues; that stretch reads ATGSPALSQLTG. Positions 551 to 563 are enriched in low complexity; the sequence is SKKPASKLKSAPC.

In terms of tissue distribution, specifically expressed in skin by keratinocytes, at the boundary area between the nucleated stratum granulosum and the denucleated stratum corneum in the epidermis (at protein level). Also expressed in stomach and other surface lining tissues like intestine and tongue. Also detected in testis as well as in other tissues but at very low level.

It localises to the cytoplasm. It catalyses the reaction an N-(omega-hydroxy-ultra-long chain fatty acyl)-sphingoid base + a (9Z,12Z)-octadecadienoyl-containing triacyl-sn-glycerol = an N-[omega-(9Z,12Z-octadecadienoyloxy)-O-ultra-long chain fatty acyl]-sphingoid base + a diacylglycerol. It carries out the reaction an N-(omega-hydroxy-ultra-long chain fatty acyl)-sphing-4-enine + a (9Z,12Z)-octadecadienoyl-containing triacyl-sn-glycerol = an N-(omega-(9Z,12Z-octadecadienoyloxy)-ultra-long chain fatty acyl)-sphing-4-enine + a diacylglycerol. The enzyme catalyses N-(28-hydroxyoctacosanoyl)-sphing-4-enine + a (9Z,12Z)-octadecadienoyl-containing triacyl-sn-glycerol = N-(28-(9Z,12Z-octadecadienoyloxy)-octacosanoyl)-sphing-4-enine + a diacylglycerol. The catalysed reaction is N-(30-hydroxytriacontanoyl)-sphing-4-enine + 1,2,3-tri-(9Z,12Z)-octadecadienoylglycerol = N-[30-(9Z,12Z-octadecadienoyloxy)-triacontanoyl]-sphing-4-enine + di-(9Z,12Z)-octadecadienoylglycerol. It catalyses the reaction N-(32-hydroxydotriacontanoyl)-sphing-4-enine + a (9Z,12Z)-octadecadienoyl-containing triacyl-sn-glycerol = N-(32-(9Z,12Z-octadecadienoyloxy)-dotricontanoyl)-sphing-4-enine + a diacylglycerol. It carries out the reaction N-(32-hydroxydotriacontenoyl)-sphing-4-enine + a (9Z,12Z)-octadecadienoyl-containing triacyl-sn-glycerol = an N-(32-(9Z,12Z-octadecadienoyloxy)-dotriacontenoyl)-sphing-4-enine + a diacylglycerol. The enzyme catalyses an N-(34-hydroxytetratriacontenoyl)-sphing-4-enine + a (9Z,12Z)-octadecadienoyl-containing triacyl-sn-glycerol = an N-(34-(9Z,12Z-octadecadienoyloxy)-tetratriacontenoyl)-sphing-4-enine + a diacylglycerol. The catalysed reaction is an N-(34-hydroxytetratriacontadienoyl)-sphing-4-enine + a (9Z,12Z)-octadecadienoyl-containing triacyl-sn-glycerol = an N-(34-(9Z,12Z-octadecadienoyloxy)-tetratriacontadienoyl)-sphing-4-enine + a diacylglycerol. It catalyses the reaction an N-(36-hydroxyhexatriacontenoyl)-sphing-4-enine + a (9Z,12Z)-octadecadienoyl-containing triacyl-sn-glycerol = an N-(36-(9Z,12Z-octadecadienoyloxy)-hexatriacontenoyl)-sphing-4-enine + a diacylglycerol. It carries out the reaction an N-(36-hydroxyhexatriacontadienoyl)-sphing-4-enine + a (9Z,12Z)-octadecadienoyl-containing triacyl-sn-glycerol = an N-(36-(9Z,12Z-octadecadienoyloxy)-hexatriacontadienoyl)-sphing-4-enine + a diacylglycerol. The enzyme catalyses an N-(38-hydroxyoctatriacontenoyl)-sphing-4-enine + a (9Z,12Z)-octadecadienoyl-containing triacyl-sn-glycerol = an N-(38-(9Z,12Z-octadecadienoyloxy)-octatriacontenoyl)-sphing-4-enine + a diacylglycerol. In terms of biological role, omega-hydroxyceramide transacylase involved in the synthesis of omega-O-acylceramides (esterified omega-hydroxyacyl-sphingosine; EOS), which are extremely hydrophobic lipids involved in skin barrier formation. Catalyzes the last step of the synthesis of omega-O-acylceramides by transferring linoleic acid from triglycerides to an omega-hydroxyceramide. Omega-O-acylceramides, are required for the biogenesis of lipid lamellae in the stratum corneum and the formation of the cornified lipid envelope which are essential for the epidermis barrier function. These lipids also play a role in keratinocyte differentiation. May also act on omega-hydroxylated ultra-long chain fatty acids (omega-OH ULCFA) and acylglucosylceramides (GlcEOS). The chain is Omega-hydroxyceramide transacylase from Mus musculus (Mouse).